Here is a 253-residue protein sequence, read N- to C-terminus: 5-oxoprolinase subunit A (253 aa).

The protein belongs to the LamB/PxpA family. Forms a complex composed of PxpA, PxpB and PxpC.

It catalyses the reaction 5-oxo-L-proline + ATP + 2 H2O = L-glutamate + ADP + phosphate + H(+). In terms of biological role, catalyzes the cleavage of 5-oxoproline to form L-glutamate coupled to the hydrolysis of ATP to ADP and inorganic phosphate. The polypeptide is 5-oxoprolinase subunit A (Ruegeria pomeroyi (strain ATCC 700808 / DSM 15171 / DSS-3) (Silicibacter pomeroyi)).